A 406-amino-acid chain; its full sequence is Tyrosine--tRNA ligase (406 aa).

Residue tyrosine 35 participates in L-tyrosine binding. Positions 40 to 49 (PTADSLHVGH) match the 'HIGH' region motif. Tyrosine 168 and glutamine 172 together coordinate L-tyrosine. Residues 228–232 (KMGKT) carry the 'KMSKS' region motif. Lysine 231 serves as a coordination point for ATP. The region spanning 340–404 (SELLDILVEA…RGKKNYNKIV (65 aa)) is the S4 RNA-binding domain.

The protein belongs to the class-I aminoacyl-tRNA synthetase family. TyrS type 1 subfamily. As to quaternary structure, homodimer.

Its subcellular location is the cytoplasm. It catalyses the reaction tRNA(Tyr) + L-tyrosine + ATP = L-tyrosyl-tRNA(Tyr) + AMP + diphosphate + H(+). Its function is as follows. Catalyzes the attachment of tyrosine to tRNA(Tyr) in a two-step reaction: tyrosine is first activated by ATP to form Tyr-AMP and then transferred to the acceptor end of tRNA(Tyr). The protein is Tyrosine--tRNA ligase of Clostridium perfringens (strain SM101 / Type A).